The sequence spans 496 residues: Glycerol kinase (496 aa).

Thr12 contributes to the ADP binding site. ATP-binding residues include Thr12, Thr13, and Ser14. Thr12 contributes to the sn-glycerol 3-phosphate binding site. Arg16 provides a ligand contact to ADP. Sn-glycerol 3-phosphate-binding residues include Arg82, Glu83, and Tyr134. 3 residues coordinate glycerol: Arg82, Glu83, and Tyr134. At His230 the chain carries Phosphohistidine; by HPr. Residue Asp244 participates in sn-glycerol 3-phosphate binding. Glycerol contacts are provided by Asp244 and Gln245. Positions 266 and 309 each coordinate ADP. 4 residues coordinate ATP: Thr266, Gly309, Gln313, and Gly410. ADP contacts are provided by Gly410 and Asn414.

The protein belongs to the FGGY kinase family. Homotetramer and homodimer (in equilibrium). Post-translationally, the phosphoenolpyruvate-dependent sugar phosphotransferase system (PTS), including enzyme I, and histidine-containing protein (HPr) are required for the phosphorylation, which leads to the activation of the enzyme.

The enzyme catalyses glycerol + ATP = sn-glycerol 3-phosphate + ADP + H(+). The protein operates within polyol metabolism; glycerol degradation via glycerol kinase pathway; sn-glycerol 3-phosphate from glycerol: step 1/1. Activated by phosphorylation and inhibited by fructose 1,6-bisphosphate (FBP). Its function is as follows. Key enzyme in the regulation of glycerol uptake and metabolism. Catalyzes the phosphorylation of glycerol to yield sn-glycerol 3-phosphate. The polypeptide is Glycerol kinase (Bacillus licheniformis (strain ATCC 14580 / DSM 13 / JCM 2505 / CCUG 7422 / NBRC 12200 / NCIMB 9375 / NCTC 10341 / NRRL NRS-1264 / Gibson 46)).